We begin with the raw amino-acid sequence, 143 residues long: Putative complexin-1 (143 aa).

The tract at residues 15 to 71 (NEVTGGLGLKDDGGEKTETGEDPEVVAARLEQEERRKEKHRKMEQEREKMRQGIRDK) is disordered. Basic and acidic residues-rich tracts occupy residues 23 to 33 (LKDDGGEKTET) and 44 to 71 (LEQE…IRDK). A coiled-coil region spans residues 40–71 (VAARLEQEERRKEKHRKMEQEREKMRQGIRDK).

This sequence belongs to the complexin/synaphin family.

It is found in the cytoplasm. The protein localises to the cytosol. Positively regulates a late step in synaptic vesicle exocytosis. The protein is Putative complexin-1 (cpx-1) of Caenorhabditis briggsae.